A 333-amino-acid polypeptide reads, in one-letter code: Beta-ketoacyl-[acyl-carrier-protein] synthase III (333 aa).

Residues Cys114 and His255 contribute to the active site. The ACP-binding stretch occupies residues 256–260 (QANYR). Asn285 is an active-site residue.

This sequence belongs to the thiolase-like superfamily. FabH family. In terms of assembly, homodimer.

It localises to the cytoplasm. The enzyme catalyses malonyl-[ACP] + acetyl-CoA + H(+) = 3-oxobutanoyl-[ACP] + CO2 + CoA. The protein operates within lipid metabolism; fatty acid biosynthesis. In terms of biological role, catalyzes the condensation reaction of fatty acid synthesis by the addition to an acyl acceptor of two carbons from malonyl-ACP. Catalyzes the first condensation reaction which initiates fatty acid synthesis and may therefore play a role in governing the total rate of fatty acid production. Possesses both acetoacetyl-ACP synthase and acetyl transacylase activities. Its substrate specificity determines the biosynthesis of branched-chain and/or straight-chain of fatty acids. This Aliarcobacter butzleri (strain RM4018) (Arcobacter butzleri) protein is Beta-ketoacyl-[acyl-carrier-protein] synthase III.